Here is an 83-residue protein sequence, read N- to C-terminus: MNKAPINLQDTFLNQVRKENMPVTIYLVNGFQLKGLVRGFDNFTVVIEFEGKQQMVYKHAISTVMPLRPINLVAASQASAEER.

Residues 10 to 70 enclose the Sm domain; it reads DTFLNQVRKE…ISTVMPLRPI (61 aa).

The protein belongs to the Hfq family. In terms of assembly, homohexamer.

RNA chaperone that binds small regulatory RNA (sRNAs) and mRNAs to facilitate mRNA translational regulation in response to envelope stress, environmental stress and changes in metabolite concentrations. Also binds with high specificity to tRNAs. This Desulfitobacterium hafniense (strain Y51) protein is RNA-binding protein Hfq.